Here is a 157-residue protein sequence, read N- to C-terminus: MDRFVSTYTMRLDAKGRVSIPAPYRTVLAKDGTDLLHCHPSLAEPALDAGGTSLMAEIEALIARYPPYSEAREELAAALYGTTEMLRIDPEGRVVLTESLKTHAAIADQVTFVGLGHKFRIWEPERFRAHLAEAREKVRQLRRSLGSGSGNEGSISG.

SpoVT-AbrB domains lie at 7–54 (TYTM…GTSL) and 83–126 (TEML…EPER).

Belongs to the MraZ family. Forms oligomers.

It localises to the cytoplasm. It is found in the nucleoid. In Azorhizobium caulinodans (strain ATCC 43989 / DSM 5975 / JCM 20966 / LMG 6465 / NBRC 14845 / NCIMB 13405 / ORS 571), this protein is Transcriptional regulator MraZ.